The chain runs to 397 residues: DnaJ homolog subfamily A member 1 (397 aa).

The 63-residue stretch at 6–68 (TYYDVLGVKP…KKRELYDKGG (63 aa)) folds into the J domain. The residue at position 66 (Lys-66) is an N6-acetyllysine. Residue Ser-83 is modified to Phosphoserine. A CR-type zinc finger spans residues 121-205 (GATRKLALQK…CNGRKIVREK (85 aa)). Positions 134, 137, 150, 153, 177, 180, 193, and 196 each coordinate Zn(2+). 4 CXXCXGXG motif repeats span residues 134–141 (CDKCEGRG), 150–157 (CPNCRGTG), 177–184 (CMECQGHG), and 193–200 (CKSCNGRK). Residue Ser-335 is modified to Phosphoserine. The tract at residues 352–397 (VEETDEMDQVELVDFDPNQERRRHYNGEAYEDDEHHPRGGVQCQTS) is disordered. Positions 353 to 365 (EETDEMDQVELVD) are enriched in acidic residues. Residue Tyr-381 is modified to Phosphotyrosine. Cys-394 bears the Cysteine methyl ester mark. Residue Cys-394 is the site of S-farnesyl cysteine attachment. Positions 395 to 397 (QTS) are cleaved as a propeptide — removed in mature form.

As to quaternary structure, identified in a complex with HSPA1B and BAX. Interacts with RNF207.

It localises to the membrane. It is found in the cytoplasm. The protein localises to the microsome. The protein resides in the mitochondrion. Its subcellular location is the nucleus. It localises to the perinuclear region. Its function is as follows. Co-chaperone for HSPA8/Hsc70. Plays a role in protein transport into mitochondria via its role as co-chaperone. Functions as co-chaperone for HSPA1B and negatively regulates the translocation of BAX from the cytosol to mitochondria in response to cellular stress, thereby protecting cells against apoptosis. Stimulates ATP hydrolysis, but not the folding of unfolded proteins mediated by HSPA1A (in vitro). Promotes apoptosis in response to cellular stress mediated by exposure to anisomycin or UV. This Bos taurus (Bovine) protein is DnaJ homolog subfamily A member 1 (DNAJA1).